The chain runs to 197 residues: Segregation and condensation protein B (197 aa).

Belongs to the ScpB family. In terms of assembly, homodimer. Homodimerization may be required to stabilize the binding of ScpA to the Smc head domains. Component of a cohesin-like complex composed of ScpA, ScpB and the Smc homodimer, in which ScpA and ScpB bind to the head domain of Smc. The presence of the three proteins is required for the association of the complex with DNA.

Its subcellular location is the cytoplasm. Its function is as follows. Participates in chromosomal partition during cell division. May act via the formation of a condensin-like complex containing Smc and ScpA that pull DNA away from mid-cell into both cell halves. The chain is Segregation and condensation protein B from Malacoplasma penetrans (strain HF-2) (Mycoplasma penetrans).